Reading from the N-terminus, the 236-residue chain is Small ribosomal subunit protein uS2c (236 aa).

The protein belongs to the universal ribosomal protein uS2 family.

Its subcellular location is the plastid. The protein resides in the chloroplast. The protein is Small ribosomal subunit protein uS2c (rps2) of Crucihimalaya wallichii (Rock-cress).